The following is a 365-amino-acid chain: Putative F-box/kelch-repeat protein At3g16880 (365 aa).

Positions 1–47 (MTKMSKLPNDLLEEILSRSPLYSMRAIRLTCKKWNTLAKEESFTKKQ) constitute an F-box domain. Kelch repeat units follow at residues 98–149 (RVYH…TKKS) and 155–205 (ILSS…VKGN).

The sequence is that of Putative F-box/kelch-repeat protein At3g16880 from Arabidopsis thaliana (Mouse-ear cress).